The chain runs to 317 residues: Protein lifeguard 2 (317 aa).

The tract at residues 1–54 (MTQGKLSVANKAPGTEGQQHQANGEKKDAPAVPSAPPSYEEATSGEGLKAGTFP) is disordered. Helical transmembrane passes span 107–127 (VYTI…LFTF), 139–159 (PGWY…LACC), and 166–186 (FPWN…LTGM). The N-linked (GlcNAc...) asparagine glycan is linked to N192. 4 helical membrane passes run 195-215 (SVLL…IFSF), 226-246 (GVLF…AVLL), 252-272 (PWLH…FLAF), and 291-311 (IFGA…FLQL).

It belongs to the BI1 family. LFG subfamily. As to quaternary structure, interacts with FAS/TNFRSF6 and BAX. As to expression, brain. Highly expressed in cerebellum, also found in cortex, olfactory bulb, and hippocampus.

The protein localises to the cell membrane. Its subcellular location is the membrane raft. It localises to the postsynaptic cell membrane. Its function is as follows. Antiapoptotic protein which protects cells uniquely from Fas-induced apoptosis. Regulates Fas-mediated apoptosis in neurons by interfering with caspase-8 activation. Plays a role in cerebellar development by affecting cerebellar size, internal granular layer (IGL) thickness, and Purkinje cell (PC) development. The polypeptide is Protein lifeguard 2 (Faim2) (Mus musculus (Mouse)).